Reading from the N-terminus, the 336-residue chain is Phenylalanine--tRNA ligase alpha subunit (336 aa).

Glu257 is a Mg(2+) binding site.

The protein belongs to the class-II aminoacyl-tRNA synthetase family. Phe-tRNA synthetase alpha subunit type 1 subfamily. In terms of assembly, tetramer of two alpha and two beta subunits. Mg(2+) serves as cofactor.

The protein localises to the cytoplasm. It catalyses the reaction tRNA(Phe) + L-phenylalanine + ATP = L-phenylalanyl-tRNA(Phe) + AMP + diphosphate + H(+). In Xanthomonas campestris pv. campestris (strain 8004), this protein is Phenylalanine--tRNA ligase alpha subunit.